The following is a 205-amino-acid chain: Fe/S biogenesis protein NfuA (205 aa).

Residues cysteine 162 and cysteine 165 each coordinate [4Fe-4S] cluster.

Belongs to the NfuA family. Homodimer. The cofactor is [4Fe-4S] cluster.

In terms of biological role, involved in iron-sulfur cluster biogenesis. Binds a 4Fe-4S cluster, can transfer this cluster to apoproteins, and thereby intervenes in the maturation of Fe/S proteins. Could also act as a scaffold/chaperone for damaged Fe/S proteins. This is Fe/S biogenesis protein NfuA from Blochmanniella floridana.